We begin with the raw amino-acid sequence, 309 residues long: Nudix hydrolase 14, chloroplastic (309 aa).

Residues 1-60 constitute a chloroplast transit peptide; the sequence is MAGFTLLPSRLLAFPSRALPRRLHHHHAKLILRCKMSSSSSSLTQSITLPSQPNEPVLVS. The Nudix hydrolase domain occupies 139–292; that stretch reads ARGPAVAVLI…KVLMSIGLYE (154 aa). The Nudix box motif lies at 179–200; the sequence is MLDDDKGDFVGTAVREVEEEIG. Glutamate 194 and glutamate 198 together coordinate Mg(2+).

It belongs to the Nudix hydrolase family. As to quaternary structure, homodimer. The cofactor is Mg(2+). Mn(2+) serves as cofactor. In terms of tissue distribution, expressed in roots, leaves, stems and inflorescences.

The protein localises to the plastid. It is found in the chloroplast. The catalysed reaction is ADP-sugar + H2O = AMP + alpha-D-aldose 1-phosphate.. Its function is as follows. Mediates the hydrolysis of some nucleoside diphosphate derivatives. Can use ADP-glucose, ADP-mannose and ADP-ribose as substrates. Regulates the intracellular ADP-glucose levels linked to starch biosynthesis. The chain is Nudix hydrolase 14, chloroplastic (NUDT14) from Arabidopsis thaliana (Mouse-ear cress).